The sequence spans 561 residues: Arginine--tRNA ligase (561 aa).

The short motif at 123–133 (PNIAKDMHVGH) is the 'HIGH' region element.

Belongs to the class-I aminoacyl-tRNA synthetase family. Monomer.

The protein localises to the cytoplasm. It catalyses the reaction tRNA(Arg) + L-arginine + ATP = L-arginyl-tRNA(Arg) + AMP + diphosphate. This Chlamydia pneumoniae (Chlamydophila pneumoniae) protein is Arginine--tRNA ligase (argS).